The primary structure comprises 430 residues: Adenylosuccinate synthetase (430 aa).

Residues 12–18 and 40–42 each bind GTP; these read GDEGKGK and GHT. The Proton acceptor role is filled by D13. Mg(2+) contacts are provided by D13 and G40. IMP contacts are provided by residues 13–16, 38–41, T128, R142, Q223, T238, and R302; these read DEGK and NAGH. The active-site Proton donor is the H41. GTP-binding positions include 330 to 332 and 412 to 414; these read SID and SVG.

This sequence belongs to the adenylosuccinate synthetase family. In terms of assembly, homodimer. The cofactor is Mg(2+).

The protein localises to the cytoplasm. The catalysed reaction is IMP + L-aspartate + GTP = N(6)-(1,2-dicarboxyethyl)-AMP + GDP + phosphate + 2 H(+). Its pathway is purine metabolism; AMP biosynthesis via de novo pathway; AMP from IMP: step 1/2. In terms of biological role, plays an important role in the de novo pathway of purine nucleotide biosynthesis. Catalyzes the first committed step in the biosynthesis of AMP from IMP. The protein is Adenylosuccinate synthetase of Bacillus subtilis (strain 168).